Here is a 651-residue protein sequence, read N- to C-terminus: Acetyl-coenzyme A synthetase (651 aa).

Residues 190 to 193 (RRGK) and Thr-311 contribute to the CoA site. ATP is bound by residues 387–389 (GEP), 411–416 (DTWWQT), Asp-508, and Arg-523. Residue Ser-531 participates in CoA binding. Residue Arg-534 coordinates ATP. Val-545, His-547, and Val-550 together coordinate Mg(2+). Position 617 is an N6-acetyllysine (Lys-617).

This sequence belongs to the ATP-dependent AMP-binding enzyme family. The cofactor is Mg(2+). Post-translationally, acetylated. Deacetylation by the SIR2-homolog deacetylase activates the enzyme.

The catalysed reaction is acetate + ATP + CoA = acetyl-CoA + AMP + diphosphate. In terms of biological role, catalyzes the conversion of acetate into acetyl-CoA (AcCoA), an essential intermediate at the junction of anabolic and catabolic pathways. AcsA undergoes a two-step reaction. In the first half reaction, AcsA combines acetate with ATP to form acetyl-adenylate (AcAMP) intermediate. In the second half reaction, it can then transfer the acetyl group from AcAMP to the sulfhydryl group of CoA, forming the product AcCoA. This chain is Acetyl-coenzyme A synthetase, found in Mycobacterium bovis (strain ATCC BAA-935 / AF2122/97).